The following is a 548-amino-acid chain: NAD(P)H-quinone oxidoreductase chain 4 (548 aa).

14 helical membrane-spanning segments follow: residues 17–37 (VPWLSLSILVPIGGALLIPFI), 48–68 (WYALIVTLITFLITVAAYLTG), 103–123 (LILLTSFITSLACLAAWPVTF), 127–147 (LFFFLLLAMDGGQIAVFAVQD), 149–169 (LLFFLAWELELLPVYLLLAIW), 181–201 (FILYTAGSSLFILLAALAMGF), 222–242 (GFQLLCYAGLLIAFGVKLPIV), 256–276 (TAPVHMLLAGILLKMGGYALL), 290–310 (FAPLLIVLGVVNIIYAALTSF), 327–347 (MGFVLIGIGSFSVLGSSGAML), 348–368 (QMISHGLIGASLFFLVGATYD), 389–409 (FALWTVCALASLALPGMSGFV), 430–450 (VVICGLAAVGVVLTPVYLLSM), and 477–497 (VYIIGCLLVPIIGIGLYPRLM).

It belongs to the complex I subunit 4 family.

Its subcellular location is the cellular thylakoid membrane. It carries out the reaction a plastoquinone + NADH + (n+1) H(+)(in) = a plastoquinol + NAD(+) + n H(+)(out). It catalyses the reaction a plastoquinone + NADPH + (n+1) H(+)(in) = a plastoquinol + NADP(+) + n H(+)(out). Functionally, NDH-1 shuttles electrons from NAD(P)H, via FMN and iron-sulfur (Fe-S) centers, to quinones in the respiratory chain. The immediate electron acceptor for the enzyme in this species is believed to be plastoquinone. Couples the redox reaction to proton translocation (for every two electrons transferred, four hydrogen ions are translocated across the cytoplasmic membrane), and thus conserves the redox energy in a proton gradient. This Synechococcus sp. (strain CC9902) protein is NAD(P)H-quinone oxidoreductase chain 4.